The following is a 525-amino-acid chain: Vesicular inhibitory amino acid transporter (525 aa).

The Cytoplasmic portion of the chain corresponds to 1–132 (MATLLRSKLS…WNVTNAIQGM (132 aa)). The interval 83–107 (IHYQRGSGAPLPPSGSKDQVGGGGE) is disordered. Residues 133-153 (FVLGLPYAILHGGYLGLFLII) form a helical membrane-spanning segment. The Lumenal, vesicle segment spans residues 154–204 (FAAVVCCYTGKILIACLYEENEDGEVVRVRDSYVAIANACCAPRFPTLGGR). 3'-nitrotyrosine is present on tyrosine 186. A helical membrane pass occupies residues 205–225 (VVNVAQIIELVMTCILYVVVS). Residues 226 to 265 (GNLMYNSFPGLPVSQKSWSIIATAVLLPCAFLKNLKAVSK) lie on the Cytoplasmic side of the membrane. The helical transmembrane segment at 266–286 (FSLLCTLAHFVINILVIAYCL) threads the bilayer. Residues 287–305 (SRARDWAWEKVKFYIDVKK) are Lumenal, vesicle-facing. The chain crosses the membrane as a helical span at residues 306–326 (FPISIGIIVFSYTSQIFLPSL). The Cytoplasmic segment spans residues 327 to 341 (EGNMQQPSEFHCMMN). The helical transmembrane segment at 342-362 (WTHIAACVLKGLFALVAYLTW) threads the bilayer. Topologically, residues 363–383 (ADETKEVITDNLPGSIRAVVN) are lumenal, vesicle. The helical transmembrane segment at 384–404 (IFLVAKALLSYPLPFFAAVEV) threads the bilayer. Residues 405–438 (LEKSLFQEGSRAFFPACYSGDGRLKSWGLTLRCA) lie on the Cytoplasmic side of the membrane. The chain crosses the membrane as a helical span at residues 439–459 (LVVFTLLMAIYVPHFALLMGL). Topologically, residues 460–461 (TG) are lumenal, vesicle. A helical membrane pass occupies residues 462–482 (SLTGAGLCFLLPSLFHLRLLW). Residues 483-489 (RKLLWHQ) are Cytoplasmic-facing. The helical transmembrane segment at 490-510 (VFFDVAIFVIGGICSVSGFVH) threads the bilayer. Over 511 to 525 (SLEGLIEAYRTNAED) the chain is Lumenal, vesicle.

It belongs to the amino acid/polyamine transporter 2 family. Retina. Expressed throughout the horizontal cells or more specifically at the terminals.

The protein localises to the cytoplasmic vesicle membrane. It localises to the presynapse. It catalyses the reaction 4-aminobutanoate(out) + n H(+)(in) = 4-aminobutanoate(in) + n H(+)(out). It carries out the reaction glycine(out) + n H(+)(in) = glycine(in) + n H(+)(out). The catalysed reaction is beta-alanine(out) + n H(+)(in) = beta-alanine(in) + n H(+)(out). Functionally, antiporter that exchanges vesicular protons for cytosolic 4-aminobutanoate or to a lesser extend glycine, thus allowing their secretion from nerve terminals. The transport is equally dependent on the chemical and electrical components of the proton gradient. May also transport beta-alanine. Acidification of GABAergic synaptic vesicles is a prerequisite for 4-aminobutanoate uptake. The polypeptide is Vesicular inhibitory amino acid transporter (Homo sapiens (Human)).